Reading from the N-terminus, the 416-residue chain is Meiotically up-regulated protein PB1A10.08 (416 aa).

The protein localises to the cytoplasm. Its function is as follows. May have a role in meiosis and sporulation. This chain is Meiotically up-regulated protein PB1A10.08, found in Schizosaccharomyces pombe (strain 972 / ATCC 24843) (Fission yeast).